A 361-amino-acid chain; its full sequence is Putative agmatine deiminase (361 aa).

Residue cysteine 354 is the Amidino-cysteine intermediate of the active site.

This sequence belongs to the agmatine deiminase family.

The catalysed reaction is agmatine + H2O = N-carbamoylputrescine + NH4(+). The chain is Putative agmatine deiminase from Streptococcus pneumoniae (strain Hungary19A-6).